The sequence spans 699 residues: D-(-)-3-hydroxybutyrate oligomer hydrolase (699 aa).

The signal sequence occupies residues 1-19 (MNPSLCIAVAFACPLSALA). The active-site Charge relay system is the S303.

Belongs to the D-(-)-3-hydroxybutyrate oligomer hydrolase family.

The protein resides in the secreted. It catalyses the reaction (3R)-hydroxybutanoate dimer + H2O = 2 (R)-3-hydroxybutanoate + H(+). The protein operates within lipid metabolism; butanoate metabolism. Its function is as follows. Participates in the degradation of poly-3-hydroxybutyrate (PHB). It works downstream of poly(3-hydroxybutyrate) depolymerase, hydrolyzing D(-)-3-hydroxybutyrate oligomers of various length (3HB-oligomers) into 3HB-monomers. In Azoarcus sp. (strain BH72), this protein is D-(-)-3-hydroxybutyrate oligomer hydrolase.